The chain runs to 63 residues: Cecropin-B (63 aa).

The N-terminal stretch at 1–23 is a signal peptide; sequence MNFNKIFVFVALILAISLGNSEA. R62 is subject to Arginine amide.

This sequence belongs to the cecropin family. As to expression, strongly expressed in larval, pupal and adult fat body and hemocytes after injection of bacteria. Maximal expression is seen in pupae.

It is found in the secreted. In terms of biological role, cecropins have lytic and antibacterial activity against several Gram-positive and Gram-negative bacteria. This is Cecropin-B (CecB) from Drosophila melanogaster (Fruit fly).